A 122-amino-acid polypeptide reads, in one-letter code: FMN-binding protein (122 aa).

As to quaternary structure, monomer and homodimer. The cofactor is FMN.

The protein resides in the cytoplasm. In terms of biological role, functions as a redox protein with a potential of -325 mV. This chain is FMN-binding protein, found in Nitratidesulfovibrio vulgaris (strain DSM 19637 / Miyazaki F) (Desulfovibrio vulgaris).